The primary structure comprises 51 residues: MARNKPLGLKIRLMKAVKSNRRVPGWVMVKTDRRVTQNYKRRNWRRSNLKA.

The protein belongs to the eukaryotic ribosomal protein eL39 family.

In Picrophilus torridus (strain ATCC 700027 / DSM 9790 / JCM 10055 / NBRC 100828 / KAW 2/3), this protein is Large ribosomal subunit protein eL39.